The following is a 472-amino-acid chain: Keratin, type I cytoskeletal 14 (472 aa).

Positions 1 to 114 (MTTCSRQFTS…AGGDGLLVGS (114 aa)) are head. The coil 1A stretch occupies residues 115–150 (EKVTMQNLNDRLASYLDKVRALEEANADLEVKIRDW). The IF rod domain maps to 115 to 426 (EKVTMQNLND…RLLEGEDAHL (312 aa)). The segment at 151–168 (YQRQRPAEIKDYSPYFKT) is linker 1. Residues 169–260 (IEDLRNKILT…KNHEEEMNAL (92 aa)) are coil 1B. A linker 12 region spans residues 261–283 (RGQVGGDVNVEMDAAPGVDLSRI). A coil 2 region spans residues 284 to 422 (LNEMRDQYEK…ATYRRLLEGE (139 aa)). Positions 423-472 (DAHLSSSQFSSGSQSSRDVTSSSRQIRTKVMDVHDGKVVSTHEQVLRTKN) are tail. The segment at 425 to 472 (HLSSSQFSSGSQSSRDVTSSSRQIRTKVMDVHDGKVVSTHEQVLRTKN) is interaction with Type I keratins and keratin filaments. Residues 426 to 472 (LSSSQFSSGSQSSRDVTSSSRQIRTKVMDVHDGKVVSTHEQVLRTKN) are disordered. Positions 427 to 445 (SSSQFSSGSQSSRDVTSSS) are enriched in low complexity. At Ser435 the chain carries Phosphoserine.

Belongs to the intermediate filament family. Heterotetramer of two type I and two type II keratins. Forms a disulfide-linked heterodimer (via 2B domains) with KRT5 (via 2B domains). Forms a heterodimer with KRT1; the interaction is more abundant in the absence of KRT5. Interacts with PLEC isoform 1C, when in a heterodimer with KRT5. Interacts with TRADD and with keratin filaments. Associates with other type I keratins. Interacts with EPPK1. Interacts with KLHL24. Interacts with PKP1 (via N-terminus) and PKP2. Post-translationally, a disulfide bond is formed between rather than within filaments and promotes the formation of a keratin filament cage around the nucleus. In terms of processing, ubiquitinated by the BCR(KLHL24) E3 ubiquitin ligase complex. In terms of tissue distribution, expressed in the corneal epithelium (at protein level). Detected in the basal layer, lowered within the more apically located layers specifically in the stratum spinosum, stratum granulosum but is not detected in stratum corneum. Strongly expressed in the outer root sheath of anagen follicles but not in the germinative matrix, inner root sheath or hair. Found in keratinocytes surrounding the club hair during telogen.

Its subcellular location is the cytoplasm. The protein resides in the nucleus. In terms of biological role, the nonhelical tail domain is involved in promoting KRT5-KRT14 filaments to self-organize into large bundles and enhances the mechanical properties involved in resilience of keratin intermediate filaments in vitro. The chain is Keratin, type I cytoskeletal 14 (KRT14) from Homo sapiens (Human).